A 303-amino-acid polypeptide reads, in one-letter code: ATP synthase subunit a (303 aa).

The next 6 membrane-spanning stretches (helical) occupy residues 59–79 (HTVMMWLAALLLMATLFIWGN), 122–142 (FLLTVFFFILFMNMLGMVPWM), 148–168 (NLAVTMALALCTFVITQVAGI), 181–201 (TGGVAPWLWPIMVPVEVLGLF), 220–240 (IVYFFLLGLIFLLGHPAVAAV), and 244–264 (FAFAIFLLELFVAFVQAYVFA). A compositionally biased stretch (basic and acidic residues) spans 281 to 290 (HDDHGHDHPE). The tract at residues 281 to 303 (HDDHGHDHPEAGPSHDQGKAHHA) is disordered.

Belongs to the ATPase A chain family. As to quaternary structure, F-type ATPases have 2 components, CF(1) - the catalytic core - and CF(0) - the membrane proton channel. CF(1) has five subunits: alpha(3), beta(3), gamma(1), delta(1), epsilon(1). CF(0) has three main subunits: a(1), b(2) and c(9-12). The alpha and beta chains form an alternating ring which encloses part of the gamma chain. CF(1) is attached to CF(0) by a central stalk formed by the gamma and epsilon chains, while a peripheral stalk is formed by the delta and b chains.

It is found in the cell inner membrane. Functionally, key component of the proton channel; it plays a direct role in the translocation of protons across the membrane. This chain is ATP synthase subunit a, found in Myxococcus xanthus (strain DK1622).